Reading from the N-terminus, the 854-residue chain is Glucans biosynthesis glucosyltransferase H (854 aa).

Transmembrane regions (helical) follow at residues I155 to L175, I209 to M229, V528 to L548, I583 to L603, F619 to F639, F671 to L691, and F695 to Y715.

This sequence belongs to the glycosyltransferase 2 family. OpgH subfamily.

Its subcellular location is the cell inner membrane. It functions in the pathway glycan metabolism; osmoregulated periplasmic glucan (OPG) biosynthesis. Its function is as follows. Involved in the biosynthesis of osmoregulated periplasmic glucans (OPGs). This is Glucans biosynthesis glucosyltransferase H from Pectobacterium atrosepticum (strain SCRI 1043 / ATCC BAA-672) (Erwinia carotovora subsp. atroseptica).